The sequence spans 286 residues: Large ribosomal subunit protein uL3 (286 aa).

Residue glutamine 152 is modified to N5-methylglutamine. A compositionally biased stretch (low complexity) spans 246–265 (EAAAAAAAAEEQAAMEAAEA). The interval 246–286 (EAAAAAAAAEEQAAMEAAEAAEAKTDTVAEAEAAEKKEGDA) is disordered. A compositionally biased stretch (basic and acidic residues) spans 266 to 286 (AEAKTDTVAEAEAAEKKEGDA).

Belongs to the universal ribosomal protein uL3 family. As to quaternary structure, part of the 50S ribosomal subunit. Forms a cluster with proteins L14 and L19. In terms of processing, methylated by PrmB.

Its function is as follows. One of the primary rRNA binding proteins, it binds directly near the 3'-end of the 23S rRNA, where it nucleates assembly of the 50S subunit. This is Large ribosomal subunit protein uL3 from Roseobacter denitrificans (strain ATCC 33942 / OCh 114) (Erythrobacter sp. (strain OCh 114)).